Here is a 180-residue protein sequence, read N- to C-terminus: Molybdopterin synthase catalytic subunit (180 aa).

Substrate contacts are provided by residues His123–Arg124, Lys139, and Lys146–Glu148. The tract at residues Arg161–His180 is disordered.

It belongs to the MoaE family. MOCS2B subfamily. As to quaternary structure, heterotetramer; composed of 2 small (MOCS2A) and 2 large (MOCS2B) subunits.

It is found in the cytoplasm. It catalyses the reaction 2 [molybdopterin-synthase sulfur-carrier protein]-C-terminal-Gly-aminoethanethioate + cyclic pyranopterin phosphate + H2O = molybdopterin + 2 [molybdopterin-synthase sulfur-carrier protein]-C-terminal Gly-Gly + 2 H(+). It participates in cofactor biosynthesis; molybdopterin biosynthesis. Catalytic subunit of the molybdopterin synthase complex, a complex that catalyzes the conversion of precursor Z into molybdopterin. Acts by mediating the incorporation of 2 sulfur atoms from thiocarboxylated MOCS2A into precursor Z to generate a dithiolene group. The protein is Molybdopterin synthase catalytic subunit of Pyrenophora tritici-repentis (strain Pt-1C-BFP) (Wheat tan spot fungus).